Reading from the N-terminus, the 269-residue chain is Major capsid protein P2 (269 aa).

In terms of assembly, homotrimer.

The protein resides in the virion. Functionally, major capsid protein. The chain is Major capsid protein P2 (II) from Pseudoalteromonas phage PM2 (Bacteriophage PM2).